Consider the following 62-residue polypeptide: Protein DsrB (62 aa).

Belongs to the DsrB family.

The protein is Protein DsrB of Shigella flexneri serotype 5b (strain 8401).